The primary structure comprises 290 residues: Appressorium protein ROW2 (290 aa).

An N-terminal signal peptide occupies residues 1–19 (MFTKSVFIALVAGVLGVTA). The interval 266–290 (AIKTPSKRSVMATHVKRSPEWEEEP) is disordered.

It is found in the secreted. Its subcellular location is the nucleus. In terms of biological role, plays a role in the formation of the appressorium, a specialized infection structure with the purpose of penetrating the host surface, and is required for proper remodeling of the appressorium wall and vesicle secretion. The polypeptide is Appressorium protein ROW2 (Mycosarcoma maydis (Corn smut fungus)).